Consider the following 301-residue polypeptide: Oxygen-dependent coproporphyrinogen-III oxidase (301 aa).

Ser94 is a substrate binding site. A divalent metal cation-binding residues include His98 and His108. The active-site Proton donor is His108. 110–112 lines the substrate pocket; the sequence is NVR. Residues His147 and His177 each contribute to the a divalent metal cation site. An important for dimerization region spans residues 242–277; sequence YVEFNLVYDRGTLFGLQSGGRTESILMSMPPLARWE. 260–262 is a substrate binding site; the sequence is GGR.

It belongs to the aerobic coproporphyrinogen-III oxidase family. Homodimer. It depends on a divalent metal cation as a cofactor.

Its subcellular location is the cytoplasm. The enzyme catalyses coproporphyrinogen III + O2 + 2 H(+) = protoporphyrinogen IX + 2 CO2 + 2 H2O. Its pathway is porphyrin-containing compound metabolism; protoporphyrin-IX biosynthesis; protoporphyrinogen-IX from coproporphyrinogen-III (O2 route): step 1/1. In terms of biological role, involved in the heme biosynthesis. Catalyzes the aerobic oxidative decarboxylation of propionate groups of rings A and B of coproporphyrinogen-III to yield the vinyl groups in protoporphyrinogen-IX. In Photobacterium profundum (strain SS9), this protein is Oxygen-dependent coproporphyrinogen-III oxidase.